A 459-amino-acid chain; its full sequence is UDP-N-acetylmuramoylalanine--D-glutamate ligase (459 aa).

120 to 126 contributes to the ATP binding site; the sequence is GSNGKTT.

The protein belongs to the MurCDEF family.

Its subcellular location is the cytoplasm. The enzyme catalyses UDP-N-acetyl-alpha-D-muramoyl-L-alanine + D-glutamate + ATP = UDP-N-acetyl-alpha-D-muramoyl-L-alanyl-D-glutamate + ADP + phosphate + H(+). The protein operates within cell wall biogenesis; peptidoglycan biosynthesis. Functionally, cell wall formation. Catalyzes the addition of glutamate to the nucleotide precursor UDP-N-acetylmuramoyl-L-alanine (UMA). The protein is UDP-N-acetylmuramoylalanine--D-glutamate ligase of Lactobacillus helveticus (strain DPC 4571).